Consider the following 146-residue polypeptide: Bifunctional adenosine 5'-phosphosulfate phosphorylase/adenylylsulfatase HINT4 (146 aa).

Positions 9 to 120 (IFCEIVRNPT…YVPRWKAIKY (112 aa)) constitute an HIT domain. Residues 101–105 (HLHLH) carry the Histidine triad motif motif. The Tele-AMP-histidine intermediate role is filled by His105.

As to quaternary structure, homodimer.

It localises to the peroxisome. The catalysed reaction is sulfate + ADP + H(+) = adenosine 5'-phosphosulfate + phosphate. It carries out the reaction adenosine 5'-phosphosulfate + H2O = sulfate + AMP + 2 H(+). With respect to regulation, the adenosine 5'-phosphosulfate phosphorylase activity is enhanced at low pH. Possesses adenylylsulfatase activity in vitro, releasing AMP and sulfate from adenylyl sulfate. Also possesses adenosine 5'-phosphosulfate (APS) phosphorylase activity in vitro. Catalyzes the phosphorolysis of APS, leading to ADP and sulfate. The protein is Bifunctional adenosine 5'-phosphosulfate phosphorylase/adenylylsulfatase HINT4 of Arabidopsis thaliana (Mouse-ear cress).